Consider the following 93-residue polypeptide: MITPQNVFRHEFIGLNVEVINSKHEKFIGIKGIIIDETRNTIRVDTGKNEKLIPKSDVVFLFTLPQGEKVSIDGKVITARPEDRIKKKFTKIR.

This sequence belongs to the eukaryotic/archaeal RNase P protein component 1 family. Consists of a catalytic RNA component and at least 4-5 protein subunits.

The protein localises to the cytoplasm. It catalyses the reaction Endonucleolytic cleavage of RNA, removing 5'-extranucleotides from tRNA precursor.. Functionally, part of ribonuclease P, a protein complex that generates mature tRNA molecules by cleaving their 5'-ends. This Methanosphaera stadtmanae (strain ATCC 43021 / DSM 3091 / JCM 11832 / MCB-3) protein is Ribonuclease P protein component 1.